The following is a 157-amino-acid chain: Lectin (157 aa).

Cysteines 37 and 54 form a disulfide.

As to quaternary structure, homodimer. In terms of tissue distribution, detected in fruits (at protein level).

It localises to the secreted. In terms of biological role, binds with high affinity specifically to chito-oligosaccharides. May play a role in plant defense against pathogens by directly binding with the chitin cell wall. Forms filamentous structures at higher concentrations and may promote wound healing by forming filaments with phloem proteins like PP1. The chain is Lectin from Coccinia grandis (Ivy gourd).